Consider the following 158-residue polypeptide: Protein Smg homolog (158 aa).

It belongs to the Smg family.

This chain is Protein Smg homolog, found in Thioalkalivibrio sulfidiphilus (strain HL-EbGR7).